A 1131-amino-acid chain; its full sequence is ATP-dependent helicase FUN30 (1131 aa).

A disordered region spans residues 1 to 70 (MSGSHSNDED…HTSKPLPSGS (70 aa)). The span at 16-36 (PETSSPTKVASSSPLKPTSPT) shows a compositional bias: polar residues. Positions 76 to 111 (VNLAREFPDFSQTLVQAVFKSNSFNLQSARERLTRL) are CUE-like region. Positions 114–141 (QRQNWTWNKNASPKKSETPPPVKKSLPL) are disordered. Ser232 carries the post-translational modification Phosphoserine. Disordered stretches follow at residues 242-273 (KYGRHANDNDEEEEESMMTDDDDASGDDYTES) and 327-350 (NDKDTEENASNKRKRRAAASANES). The span at 250-271 (NDEEEEESMMTDDDDASGDDYT) shows a compositional bias: acidic residues. Ser369 bears the Phosphoserine mark. The interval 400–533 (DLMNLGEDDD…GDDDDDDDDE (134 aa)) is disordered. Residues 405–416 (GEDDDDDNDDGN) show a composition bias toward acidic residues. A compositionally biased stretch (low complexity) spans 417–432 (NDNNNSNNNNTAGADA). The span at 433–442 (TSKEKEDTKA) shows a compositional bias: basic and acidic residues. Ser451 is modified (phosphoserine). A compositionally biased stretch (acidic residues) spans 480–533 (EDEDDDVDLEAIDDELPQSEHEDDDYEEEDEDYNDEEEDVEYDDGDDDDDDDDE). In terms of domain architecture, Helicase ATP-binding spans 584–752 (NLLYQNKMSC…MSLLEFIMPN (169 aa)). Residue 597-604 (DDMGLGKT) coordinates ATP. The DEGH box motif lies at 703-706 (DEGH). Residues 953-1108 (ALKKLLKTII…EDKKSQDVLE (156 aa)) enclose the Helicase C-terminal domain.

Belongs to the SNF2/RAD54 helicase family. In terms of assembly, homodimer.

Its subcellular location is the nucleus. The protein resides in the chromosome. The catalysed reaction is ATP + H2O = ADP + phosphate + H(+). In terms of biological role, DNA helicase that possesses intrinsic ATP-dependent nucleosome-remodeling activity and is both required for DNA repair and heterochromatin organization. Promotes DNA end resection of double-strand breaks (DSBs) following DNA damage: probably acts by weakening histone DNA interactions in nucleosomes flanking DSBs, facilitating single-stranded DNA (ssDNA) production by the EXO1 and SGS1 machinery. Promotes gene silencing at heterochromatin by regulating the chromatin structure within or around silent loci. Also required for heterochromatin organization at centromeres. The protein is ATP-dependent helicase FUN30 (FUN30) of Saccharomyces cerevisiae (strain ATCC 204508 / S288c) (Baker's yeast).